The following is a 213-amino-acid chain: Ribosomal RNA large subunit methyltransferase E (213 aa).

Positions 60, 62, 80, 96, and 121 each coordinate S-adenosyl-L-methionine. The Proton acceptor role is filled by K161.

Belongs to the class I-like SAM-binding methyltransferase superfamily. RNA methyltransferase RlmE family.

It localises to the cytoplasm. It catalyses the reaction uridine(2552) in 23S rRNA + S-adenosyl-L-methionine = 2'-O-methyluridine(2552) in 23S rRNA + S-adenosyl-L-homocysteine + H(+). In terms of biological role, specifically methylates the uridine in position 2552 of 23S rRNA at the 2'-O position of the ribose in the fully assembled 50S ribosomal subunit. This Xylella fastidiosa (strain 9a5c) protein is Ribosomal RNA large subunit methyltransferase E.